Consider the following 422-residue polypeptide: E3 ubiquitin-protein ligase CBLL2 (422 aa).

The RING-type zinc-finger motif lies at 54-94 (CDKCDLPIKIYGRIIPCKHAFCYNCANLYDKIGYKICPRCS). An HYB domain region spans residues 93 to 151 (CSYPVLRIEEHKRGSVFMCSVVQGCKRTYLSQKSLQAHIKRRHKRARKQVASASLEKLR). The C2H2-type zinc-finger motif lies at 109-135 (FMCSVVQGCKRTYLSQKSLQAHIKRRH). Disordered stretches follow at residues 190 to 213 (MQQMPHEQHNQPHKDLQVPPPELS) and 378 to 422 (QTDA…HRPY). Positions 195–205 (HEQHNQPHKDL) are enriched in basic and acidic residues. Residues 393–405 (LPPPPPTWSPPPS) show a composition bias toward pro residues. Residues 410-422 (GSHHSYQRRHRPY) are compositionally biased toward basic residues.

In terms of assembly, homodimer.

It is found in the cytoplasm. It catalyses the reaction S-ubiquitinyl-[E2 ubiquitin-conjugating enzyme]-L-cysteine + [acceptor protein]-L-lysine = [E2 ubiquitin-conjugating enzyme]-L-cysteine + N(6)-ubiquitinyl-[acceptor protein]-L-lysine.. It functions in the pathway protein modification; protein ubiquitination. In terms of biological role, E3 ubiquitin ligase catalyzing the covalent attachment of ubiquitin moieties onto substrate proteins. May operate on tyrosine-phosphorylated SRC substrates. The polypeptide is E3 ubiquitin-protein ligase CBLL2 (CBLL2) (Macaca fascicularis (Crab-eating macaque)).